The primary structure comprises 74 residues: Large ribosomal subunit protein bL31 (74 aa).

Belongs to the bacterial ribosomal protein bL31 family. Type A subfamily. Part of the 50S ribosomal subunit.

Binds the 23S rRNA. The sequence is that of Large ribosomal subunit protein bL31 from Afipia carboxidovorans (strain ATCC 49405 / DSM 1227 / KCTC 32145 / OM5) (Oligotropha carboxidovorans).